Here is a 201-residue protein sequence, read N- to C-terminus: Recombination protein RecR (201 aa).

The C4-type zinc finger occupies Cys59–Cys74. The 96-residue stretch at Ser82 to Pro177 folds into the Toprim domain.

This sequence belongs to the RecR family.

In terms of biological role, may play a role in DNA repair. It seems to be involved in an RecBC-independent recombinational process of DNA repair. It may act with RecF and RecO. In Rickettsia massiliae (strain Mtu5), this protein is Recombination protein RecR.